Here is a 117-residue protein sequence, read N- to C-terminus: Large ribosomal subunit protein uL18 (117 aa).

Belongs to the universal ribosomal protein uL18 family. Part of the 50S ribosomal subunit; part of the 5S rRNA/L5/L18/L25 subcomplex. Contacts the 5S and 23S rRNAs.

In terms of biological role, this is one of the proteins that bind and probably mediate the attachment of the 5S RNA into the large ribosomal subunit, where it forms part of the central protuberance. The sequence is that of Large ribosomal subunit protein uL18 from Edwardsiella ictaluri (strain 93-146).